The following is a 406-amino-acid chain: Fructose-1,6-bisphosphatase, chloroplastic (406 aa).

The transit peptide at 1 to 47 (MAAAATTSSHLLLLSRQQAAASLQCGLSFRRQPGRLAGGSSAPSVRC) directs the protein to the chloroplast. 5 residues coordinate Mg(2+): glutamate 128, glutamate 157, aspartate 178, leucine 180, and aspartate 181. 181–184 (DGSS) contributes to the substrate binding site. Cysteines 222 and 227 form a disulfide. 5 residues coordinate substrate: asparagine 286, tyrosine 318, tyrosine 336, tyrosine 338, and lysine 348. Glutamate 354 contacts Mg(2+).

This sequence belongs to the FBPase class 1 family. Homotetramer. It depends on Mg(2+) as a cofactor.

It localises to the plastid. Its subcellular location is the chloroplast stroma. The enzyme catalyses beta-D-fructose 1,6-bisphosphate + H2O = beta-D-fructose 6-phosphate + phosphate. It functions in the pathway carbohydrate biosynthesis; Calvin cycle. With respect to regulation, inhibited by sodium chloride. Its function is as follows. Catalyzes the irreversible reaction from fructose-1,6-bisphosphate to fructose-6-phosphate and inorganic phosphate, to regenerate the primary CO(2) acceptor molecule, ribulose-1,5-bisphosphate. Involved in the regulation of photosynthetic performance and sucrose synthesis. This chain is Fructose-1,6-bisphosphatase, chloroplastic, found in Oryza sativa subsp. indica (Rice).